Consider the following 341-residue polypeptide: Cell wall mannoprotein PIR1 (341 aa).

The signal sequence occupies residues 1 to 18 (MQYKKSLVASALVTTSLA). Positions 19 to 63 (AYAPKDPWSTLTPSATYKGGITDYSSTFGIAVEPIATTASSKAKR) are excised as a propeptide. PIR1/2/3 repeat units follow at residues 64 to 82 (AAAI…TKTT), 83 to 101 (AAAV…TKTK), 102 to 120 (AAAV…TKTT), 126 to 144 (AAAV…TKTK), 145 to 163 (AAAV…TKTT), 164 to 182 (AAAV…TKTT), 183 to 201 (AAAV…TNTT), and 202 to 220 (VAPV…TLTS).

It belongs to the PIR protein family. Covalently linked to beta-1,3-glucan of the inner cell wall layer via an alkali-sensitive ester linkage between the gamma-carboxyl group of glutamic acids, arising from specific glutamines within the PIR1/2/3 repeats, and hydroxyl groups of glucoses of beta-1,3-glucan chains. In terms of processing, O-glycosylated. Extensively O-mannosylated.

It is found in the secreted. It localises to the cell wall. In terms of biological role, component of the outer cell wall layer. Required for stability of the cell wall and for optimal growth. Required for resistance against several antifungal and cell wall-perturbing agents and for tolerance to heat shock. The sequence is that of Cell wall mannoprotein PIR1 (PIR1) from Saccharomyces cerevisiae (strain RM11-1a) (Baker's yeast).